Here is a 95-residue protein sequence, read N- to C-terminus: CRISPR-associated endoribonuclease Cas2 1 (95 aa).

Position 8 (D8) interacts with Mg(2+).

It belongs to the CRISPR-associated endoribonuclease Cas2 protein family. Homodimer, forms a heterotetramer with a Cas1 homodimer. Requires Mg(2+) as cofactor.

Functionally, CRISPR (clustered regularly interspaced short palindromic repeat), is an adaptive immune system that provides protection against mobile genetic elements (viruses, transposable elements and conjugative plasmids). CRISPR clusters contain sequences complementary to antecedent mobile elements and target invading nucleic acids. CRISPR clusters are transcribed and processed into CRISPR RNA (crRNA). Functions as a ssRNA-specific endoribonuclease. Involved in the integration of spacer DNA into the CRISPR cassette. This is CRISPR-associated endoribonuclease Cas2 1 from Pyrobaculum aerophilum (strain ATCC 51768 / DSM 7523 / JCM 9630 / CIP 104966 / NBRC 100827 / IM2).